Here is a 444-residue protein sequence, read N- to C-terminus: tRNA (guanine-N(7)-)-methyltransferase non-catalytic subunit TRM82 (444 aa).

WD repeat units lie at residues 1–47 (MSVI…WSDD), 48–99 (FDKI…LGAP), 100–147 (PIYS…KRFC), 148–192 (FSKR…EPIL), 193–237 (GHVS…DKWL), 238–279 (FGHK…STFD), and 308–354 (FAVS…ITFP). The tract at residues 55 to 92 (RNTTAKEQQGQSSENENENKKLKSNKGDSIKRTAAKVP) is disordered. The span at 71 to 85 (NENKKLKSNKGDSIK) shows a compositional bias: basic and acidic residues. Ser-93 carries the phosphoserine modification.

The protein belongs to the WD repeat TRM82 family. As to quaternary structure, forms a heterodimer with the catalytic subunit TRM8.

It is found in the nucleus. It functions in the pathway tRNA modification; N(7)-methylguanine-tRNA biosynthesis. Functionally, required for the formation of N(7)-methylguanine at position 46 (m7G46) in tRNA, a modification required to maintain stability of tRNAs; its absence resulting in tRNA decay. In the complex, it is required to stabilize and induce conformational changes of the catalytic subunit. The protein is tRNA (guanine-N(7)-)-methyltransferase non-catalytic subunit TRM82 of Saccharomyces cerevisiae (strain RM11-1a) (Baker's yeast).